We begin with the raw amino-acid sequence, 400 residues long: 1-deoxy-D-xylulose 5-phosphate reductoisomerase (400 aa).

NADPH-binding residues include T10, G11, S12, I13, G36, N38, and N124. Residue K125 coordinates 1-deoxy-D-xylulose 5-phosphate. E126 is a binding site for NADPH. Residue D150 participates in Mn(2+) binding. 1-deoxy-D-xylulose 5-phosphate contacts are provided by S151, E152, S186, and H209. Residue E152 participates in Mn(2+) binding. G215 is a binding site for NADPH. The 1-deoxy-D-xylulose 5-phosphate site is built by S222, N227, K228, and E231. E231 contributes to the Mn(2+) binding site.

This sequence belongs to the DXR family. The cofactor is Mg(2+). Requires Mn(2+) as cofactor.

The catalysed reaction is 2-C-methyl-D-erythritol 4-phosphate + NADP(+) = 1-deoxy-D-xylulose 5-phosphate + NADPH + H(+). It functions in the pathway isoprenoid biosynthesis; isopentenyl diphosphate biosynthesis via DXP pathway; isopentenyl diphosphate from 1-deoxy-D-xylulose 5-phosphate: step 1/6. Its function is as follows. Catalyzes the NADPH-dependent rearrangement and reduction of 1-deoxy-D-xylulose-5-phosphate (DXP) to 2-C-methyl-D-erythritol 4-phosphate (MEP). In Aliivibrio salmonicida (strain LFI1238) (Vibrio salmonicida (strain LFI1238)), this protein is 1-deoxy-D-xylulose 5-phosphate reductoisomerase.